The following is a 198-amino-acid chain: Sorcin (198 aa).

EF-hand domains lie at 29 to 64 (GQTQ…SGIA), 70 to 103 (FNLE…AVLN), 100 to 135 (AVLN…MGFR), and 134 to 169 (FRLS…LRAL). Residues Asp83, Asp85, Ser87, Thr89, Glu94, Asp113, Asp115, Ser117, Thr119, and Glu124 each coordinate Ca(2+).

As to quaternary structure, homodimer. Interacts with GCA, RYR2 and ANXA7. As to expression, detected in cardiac myocytes.

It localises to the cytoplasm. The protein localises to the sarcoplasmic reticulum membrane. In terms of biological role, calcium-binding protein that modulates excitation-contraction coupling in the heart. Contributes to calcium homeostasis in the heart sarcoplasmic reticulum. Modulates the activity of RYR2 calcium channels. In Homo sapiens (Human), this protein is Sorcin (SRI).